We begin with the raw amino-acid sequence, 99 residues long: Sarcosine oxidase subunit delta (99 aa).

Residues Cys-6, Cys-9, His-59, and Cys-63 each coordinate Zn(2+).

It belongs to the SoxD family. In terms of assembly, heterotetramer composed of subunits alpha (SoxA), beta (SoxB), gamma (SoxG) and delta (SoxD).

The protein localises to the cytoplasm. The catalysed reaction is sarcosine + (6S)-5,6,7,8-tetrahydrofolate + O2 = (6R)-5,10-methylene-5,6,7,8-tetrahydrofolate + glycine + H2O2. It carries out the reaction sarcosine + O2 + H2O = formaldehyde + glycine + H2O2. Inhibited by Zn(2+), Cu(2+), Cd(2+), Hg(2+), Ag(+), p-chloromercuribenzoate (p-CMB), iodoacetamide, N-ethylmaleimide, CN(-), o-phenanthroline and sodium lauryl sulfate. Functionally, in the presence of tetrahydrofolate, catalyzes the oxidative demethylation of sarcosine to yield glycine, 5,10-methylenetetrahydrofolate and hydrogen peroxide. In the absence of tetrahydrofolate, catalyzes the oxidative demethylation of sarcosine to yield glycine, formaldehyde and hydrogen peroxide. Can also use N-methyl-L-alanine and N-ethyl-L-glycine. Is very specific for oxygen as an acceptor. The polypeptide is Sarcosine oxidase subunit delta (Corynebacterium sp. (strain U-96)).